Here is a 124-residue protein sequence, read N- to C-terminus: Small ribosomal subunit protein bS6 (124 aa).

The tract at residues 100–124 is disordered; the sequence is KERRAARQKTGETQENVSQEESSTN. Residues 110 to 124 show a composition bias toward polar residues; that stretch reads GETQENVSQEESSTN.

Belongs to the bacterial ribosomal protein bS6 family.

In terms of biological role, binds together with bS18 to 16S ribosomal RNA. The polypeptide is Small ribosomal subunit protein bS6 (Fervidobacterium nodosum (strain ATCC 35602 / DSM 5306 / Rt17-B1)).